A 734-amino-acid chain; its full sequence is Protein arginine N-methyltransferase 5 (734 aa).

The segment covering 1-16 (MSNRTYADNLFPQQVA) has biased composition (polar residues). The segment at 1–39 (MSNRTYADNLFPQQVAEQHEEQMSSGSSPKSNSPSRSIS) is disordered. Over residues 24 to 39 (SSGSSPKSNSPSRSIS) the composition is skewed to low complexity. A TIM barrel region spans residues 42 to 329 (EAANSRIHIG…EYSQALRHAV (288 aa)). One can recognise an SAM-dependent MTase PRMT-type domain in the interval 360–706 (LQAPLQPLSE…VDNTGVWYEW (347 aa)). Y376 is a binding site for S-adenosyl-L-methionine. F379 lines the a protein pocket. Residues 385–386 (KY), E450, and 477–478 (DM) contribute to the S-adenosyl-L-methionine site. E499 and E508 together coordinate a protein. Active-site proton donor/acceptor residues include E499 and E508. The beta barrel stretch occupies residues 529 to 734 (PQKYTSYVKP…PNGESYYMRM (206 aa)). Residues 541-589 (STHIHQTIKAQSIPYLSRAIPSHGRGEPELDEDEMWIQKYPQGHVRNNM) form a dimerization region.

The protein belongs to the class I-like SAM-binding methyltransferase superfamily. Protein arginine N-methyltransferase family. Homodimer. Interacts with cep-1 (via C-terminus domain); does not methylate cep-1. Interacts with cbp-1 (via N-terminus domain and HAT domain); the interaction results in methylation of cbp-1. Component of a complex that contains cep-1 and cbp-1. May interact with pid-2, pid-4 and pid-5.

Its subcellular location is the nucleus. The catalysed reaction is L-arginyl-[protein] + 2 S-adenosyl-L-methionine = N(omega),N(omega)'-dimethyl-L-arginyl-[protein] + 2 S-adenosyl-L-homocysteine + 2 H(+). Catalyzes the symmetrical dimethylation of arginine residues in targets such as small nuclear ribonucleoproteins, histone H2A/H4 and cbp-1. Dimethylation occurs in a distributive manner where the protein is released after the addition of the first methyl group prior to rebinding for the addition of the second methyl group. Plays a role in the negative regulation of DNA damage-induced apoptosis. By methylating cbp-1, may prevent apoptosis by repressing the capacity of cbp-1 to enhance cep-1 dependent transcription activation of the programmed cell death activator egl-1. Plays a role in heat and oxidative stress resistance. This Caenorhabditis elegans protein is Protein arginine N-methyltransferase 5.